A 201-amino-acid polypeptide reads, in one-letter code: Large ribosomal subunit protein uL4 (201 aa).

The tract at residues 44–68 is disordered; sequence KAQKTRSEVAGTTKKSKKQKGGGAR.

This sequence belongs to the universal ribosomal protein uL4 family. In terms of assembly, part of the 50S ribosomal subunit.

One of the primary rRNA binding proteins, this protein initially binds near the 5'-end of the 23S rRNA. It is important during the early stages of 50S assembly. It makes multiple contacts with different domains of the 23S rRNA in the assembled 50S subunit and ribosome. Its function is as follows. Forms part of the polypeptide exit tunnel. This chain is Large ribosomal subunit protein uL4, found in Xanthomonas oryzae pv. oryzae (strain MAFF 311018).